Here is a 348-residue protein sequence, read N- to C-terminus: Organic solute transporter alpha-like protein 3 (348 aa).

Topologically, residues 1–49 are extracellular; the sequence is MAKEHGAMRSVLNLIGSVMLPQDTSNCSDRHDTPSAPEFLSHLQPFQTV. N26 is a glycosylation site (N-linked (GlcNAc...) asparagine). A helical membrane pass occupies residues 50-70; that stretch reads LLSIASFSTTIVLCLSLIHWF. Over 71–84 the chain is Cytoplasmic; it reads YVYKYVSIEKRRNK. A helical membrane pass occupies residues 85–105; sequence LYWLIAVFPVACSCSFIAMCV. The Extracellular segment spans residues 106-109; that stretch reads PRTA. The helical transmembrane segment at 110–130 threads the bilayer; that stretch reads VILTCIGVLYYLMCLFVIVSL. Topologically, residues 131 to 180 are cytoplasmic; it reads ARHLFGGRESFSTCLQYDDRPIDFRSPPFCCIIPKLPTARSTEKNIRRLE. Residues 181-201 form a helical membrane-spanning segment; the sequence is WCVLQAPIVRSIIIFLDVVAV. The Extracellular portion of the chain corresponds to 202-213; the sequence is AEMREDATPYIR. The helical transmembrane segment at 214–234 threads the bilayer; sequence YSDMASLCSLLLAIFGVHTLA. Topologically, residues 235-240 are cytoplasmic; that stretch reads RVTSNK. The helical transmembrane segment at 241–261 threads the bilayer; sequence LSAYCFMSMFRLVDISLLFFS. Over 262–291 the chain is Extracellular; that stretch reads AQQPMIFQNVLLRFNLISCGPLLNAQENAY. Residues 292–312 form a helical membrane-spanning segment; sequence FVCNFIITCEMLLLSVLATWL. Residues 313–348 are Cytoplasmic-facing; that stretch reads LAPRHNAMFDAYRPSMALSETTASLNETEQSMILDH.

This sequence belongs to the OST-alpha family.

It is found in the cell membrane. In terms of biological role, probable transporter. The sequence is that of Organic solute transporter alpha-like protein 3 (osta-3) from Caenorhabditis elegans.